Consider the following 137-residue polypeptide: DNA-directed RNA polymerase subunit omega (137 aa).

The tract at residues 78–137 is disordered; the sequence is DEPEPEAVPLLSSSPAAAAVAPQAASGDDNDIQFDRMSEEDLLRGLENLAPPTETEDEGD. A compositionally biased stretch (low complexity) spans 84-103; it reads AVPLLSSSPAAAAVAPQAAS. Basic and acidic residues predominate over residues 110-121; it reads QFDRMSEEDLLR.

The protein belongs to the RNA polymerase subunit omega family. The RNAP catalytic core consists of 2 alpha, 1 beta, 1 beta' and 1 omega subunit. When a sigma factor is associated with the core the holoenzyme is formed, which can initiate transcription.

It catalyses the reaction RNA(n) + a ribonucleoside 5'-triphosphate = RNA(n+1) + diphosphate. Promotes RNA polymerase assembly. Latches the N- and C-terminal regions of the beta' subunit thereby facilitating its interaction with the beta and alpha subunits. The protein is DNA-directed RNA polymerase subunit omega of Methylobacterium sp. (strain 4-46).